A 354-amino-acid polypeptide reads, in one-letter code: Phenylalanine 4-monooxygenase, chloroplastic (354 aa).

The transit peptide at 1-60 directs the protein to the chloroplast; it reads MAFPLQKTFLCSNGQSFPCSNGRSTSTLLASDLKFQRLNKPFILRVGSMQIRNSPKEHPR. The Fe cation site is built by histidine 229, histidine 234, and glutamate 274.

It belongs to the biopterin-dependent aromatic amino acid hydroxylase family. In terms of assembly, forms monomers. Fe(2+) is required as a cofactor.

The protein resides in the plastid. The protein localises to the chloroplast. It carries out the reaction (6R)-L-erythro-5,6,7,8-tetrahydrobiopterin + L-phenylalanine + O2 = (4aS,6R)-4a-hydroxy-L-erythro-5,6,7,8-tetrahydrobiopterin + L-tyrosine. Its function is as follows. Catalyzes the hydroxylation of L-phenylalanine to L-tyrosine. Does not seem to be tetrahydropterin-dependent and shows preference for 10-formyltetrahydrofolate as cosubstrate and electron donor. In Pinus taeda (Loblolly pine), this protein is Phenylalanine 4-monooxygenase, chloroplastic.